Reading from the N-terminus, the 63-residue chain is Putative alpha-neurotoxin RjAa9 (63 aa).

The 60-residue stretch at 1-60 folds into the LCN-type CS-alpha/beta domain; that stretch reads KEGYPVDWGNCKYECMSDEYCKDLCADRKATSGYCYKLNWSCYCKGLPDDSPIKTPGKCR. 4 cysteine pairs are disulfide-bonded: C11–C59, C15–C35, C21–C42, and C25–C44.

This sequence belongs to the long (4 C-C) scorpion toxin superfamily. Sodium channel inhibitor family. Alpha subfamily. As to expression, expressed by the venom gland.

It localises to the secreted. Functionally, alpha toxins bind voltage-independently at site-3 of sodium channels (Nav) and inhibits the inactivation of the activated channels, thereby blocking neuronal transmission. This is Putative alpha-neurotoxin RjAa9 from Rhopalurus junceus (Caribbean blue scorpion).